Consider the following 342-residue polypeptide: Phosphate acyltransferase (342 aa).

The protein belongs to the PlsX family. In terms of assembly, homodimer. Probably interacts with PlsY.

Its subcellular location is the cytoplasm. It catalyses the reaction a fatty acyl-[ACP] + phosphate = an acyl phosphate + holo-[ACP]. Its pathway is lipid metabolism; phospholipid metabolism. Functionally, catalyzes the reversible formation of acyl-phosphate (acyl-PO(4)) from acyl-[acyl-carrier-protein] (acyl-ACP). This enzyme utilizes acyl-ACP as fatty acyl donor, but not acyl-CoA. The chain is Phosphate acyltransferase from Leuconostoc mesenteroides subsp. mesenteroides (strain ATCC 8293 / DSM 20343 / BCRC 11652 / CCM 1803 / JCM 6124 / NCDO 523 / NBRC 100496 / NCIMB 8023 / NCTC 12954 / NRRL B-1118 / 37Y).